Consider the following 56-residue polypeptide: Large ribosomal subunit protein eL40 (56 aa).

This sequence belongs to the eukaryotic ribosomal protein eL40 family.

This is Large ribosomal subunit protein eL40 from Sulfurisphaera tokodaii (strain DSM 16993 / JCM 10545 / NBRC 100140 / 7) (Sulfolobus tokodaii).